An 836-amino-acid chain; its full sequence is Ethylene receptor 3 (836 aa).

3 helical membrane-spanning segments follow: residues 137 to 157, 166 to 186, and 204 to 224; these read LIAA…AGLR, LVQF…TAFT, and LTAL…PQLL. Cys-176 and His-180 together coordinate Cu cation. Residues 269–413 form the GAF domain; sequence DRHTVLYTTL…VVAGQVAVAL (145 aa). The stretch at 416-452 forms a coiled coil; it reads ATLLEESRAMRDRLAEQNRELLQARRDALMANEARQA. In terms of domain architecture, Histidine kinase spans 457–691; it reads MSQGMRRPIH…LVLRFQLQSP (235 aa). In terms of domain architecture, Response regulatory spans 718–834; it reads LLIDDDDDIN…LKDELARILQ (117 aa).

It belongs to the ethylene receptor family. The cofactor is Cu cation.

It localises to the endoplasmic reticulum membrane. It carries out the reaction ATP + protein L-histidine = ADP + protein N-phospho-L-histidine.. Functionally, ethylene receptor related to bacterial two-component regulators. Acts as a negative regulator of ethylene signaling. May delay the transition from the vegetative stage to the floral stage by up-regulating GI (GIGANTEA) and RCN1 and cause starch accumulation in stems by down-regulating the alpha-amylase AMY3D. This Oryza sativa subsp. japonica (Rice) protein is Ethylene receptor 3 (ETR3).